The following is a 568-amino-acid chain: Estrogen receptor beta (568 aa).

The tract at residues 1 to 177 (MHQQSPVDDV…SLRGKADMHY (177 aa)) is modulating. 2 NR C4-type zinc fingers span residues 178-198 (CAVC…CEGC) and 214-238 (CPAT…LRKC). The nuclear receptor DNA-binding region spans 178-243 (CAVCSDYASG…RLRKCYEVGM (66 aa)). In terms of domain architecture, NR LBD spans 300 to 536 (TPEELIARIM…DLLLEMLDAH (237 aa)).

Belongs to the nuclear hormone receptor family. NR3 subfamily. As to quaternary structure, binds DNA as a homodimer. Can form a heterodimer with ER-alpha.

It is found in the nucleus. Its function is as follows. Binds estrogens with an affinity similar to that of ER-alpha, and activates expression of reporter genes containing estrogen response elements (ERE) in an estrogen-dependent manner. The polypeptide is Estrogen receptor beta (esr2) (Oncorhynchus mykiss (Rainbow trout)).